The chain runs to 174 residues: Large ribosomal subunit protein uL22 (174 aa).

The protein belongs to the universal ribosomal protein uL22 family. In terms of assembly, part of the 50S ribosomal subunit.

In terms of biological role, this protein binds specifically to 23S rRNA. It makes multiple contacts with different domains of the 23S rRNA in the assembled 50S subunit and ribosome. Functionally, the globular domain of the protein is located near the polypeptide exit tunnel on the outside of the subunit, while an extended beta-hairpin is found that lines the wall of the exit tunnel in the center of the 70S ribosome. This is Large ribosomal subunit protein uL22 from Nanoarchaeum equitans (strain Kin4-M).